A 391-amino-acid chain; its full sequence is Elongation factor Tu (391 aa).

The tr-type G domain maps to 10–201 (KPHVNIGTIG…AVDDYIPTPE (192 aa)). The segment at 19-26 (GHVDHGKT) is G1. 19-26 (GHVDHGKT) lines the GTP pocket. Residue Thr-26 participates in Mg(2+) binding. The segment at 55-59 (GITIS) is G2. The G3 stretch occupies residues 76-79 (DCPG). GTP-binding positions include 76 to 80 (DCPGH) and 131 to 134 (NKCD). Residues 131-134 (NKCD) form a G4 region. Residues 169–171 (SAL) form a G5 region.

The protein belongs to the TRAFAC class translation factor GTPase superfamily. Classic translation factor GTPase family. EF-Tu/EF-1A subfamily. Monomer.

The protein localises to the cytoplasm. The catalysed reaction is GTP + H2O = GDP + phosphate + H(+). Functionally, GTP hydrolase that promotes the GTP-dependent binding of aminoacyl-tRNA to the A-site of ribosomes during protein biosynthesis. In Brucella anthropi (strain ATCC 49188 / DSM 6882 / CCUG 24695 / JCM 21032 / LMG 3331 / NBRC 15819 / NCTC 12168 / Alc 37) (Ochrobactrum anthropi), this protein is Elongation factor Tu.